A 1021-amino-acid polypeptide reads, in one-letter code: Probable LRR receptor-like serine/threonine-protein kinase RFK1 (1021 aa).

The first 39 residues, 1–39 (MISLYQILAEKKKKKKNDLNIFAFSVFAIICFKFYSVNA), serve as a signal peptide directing secretion. Residues 41–625 (KLPQQEVDAL…PKTGMSPGAY (585 aa)) are Extracellular-facing. N-linked (GlcNAc...) asparagine glycosylation is present at Asn96. LRR repeat units lie at residues 99 to 122 (DCHVVKFAFKDHNLPGTLPQIVKL) and 123 to 146 (PYLREIDLAYNYINGTLPREWASS). N-linked (GlcNAc...) asparagine glycosylation is found at Asn136, Asn147, and Asn168. LRR repeat units lie at residues 148–168 (LTFISLLVNRLSGEIPKEFGN), 169–192 (SSLTYLDLESNAFSGTIPQELGNL), 193–216 (VHLKKLLLSSNKLTGTLPASLARL), 218–240 (NMTDFRINDLQLSGTIPSYIQNW), and 241–266 (KQLERLEMIASGLTGPIPSVISVLSN). A glycan (N-linked (GlcNAc...) asparagine) is linked at Asn218. 2 N-linked (GlcNAc...) asparagine glycosylation sites follow: Asn287 and Asn300. LRR repeat units follow at residues 288–312 (VTGLTKIILKNCNISGQIPTYLSHL), 313–336 (KELETLDLSFNKLVGGIPSFAQAE), 338–359 (LRFIILAGNMLEGDAPDELLRD), and 361–381 (ITVDLSYNNLKWQSPESRACR). N-linked (GlcNAc...) asparagine glycans are attached at residues Asn486 and Asn512. The helical transmembrane segment at 626–646 (IAIGIGAPCLIIFILGFLWIC) threads the bilayer. The Cytoplasmic segment spans residues 647–1021 (GCLPRCGRQR…QERKKEESRP (375 aa)). Thr670 bears the Phosphothreonine mark. The Protein kinase domain maps to 681 to 956 (FNPTNKIGEG…EVVAMLEGLY (276 aa)). ATP-binding positions include 687–695 (IGEGGFGAV) and Lys709. Phosphotyrosine is present on Tyr754. Asp807 serves as the catalytic Proton acceptor. Residue Ser840 is modified to Phosphoserine. Thr841 and Thr846 each carry phosphothreonine. Tyr854 is modified (phosphotyrosine). Positions 985-1021 (ENNSKTQCSVKSYPSSSSTSSGAGQAVQERKKEESRP) are disordered. Residues 993–1005 (SVKSYPSSSSTSS) show a composition bias toward low complexity. The segment covering 1012 to 1021 (QERKKEESRP) has biased composition (basic and acidic residues).

It belongs to the protein kinase superfamily. Ser/Thr protein kinase family. In terms of tissue distribution, mostly expressed in flower buds, especially in stamens.

Its subcellular location is the membrane. The catalysed reaction is L-seryl-[protein] + ATP = O-phospho-L-seryl-[protein] + ADP + H(+). It catalyses the reaction L-threonyl-[protein] + ATP = O-phospho-L-threonyl-[protein] + ADP + H(+). The polypeptide is Probable LRR receptor-like serine/threonine-protein kinase RFK1 (RKF1) (Arabidopsis thaliana (Mouse-ear cress)).